The sequence spans 171 residues: Probable chemoreceptor glutamine deamidase CheD 1 (171 aa).

Low complexity predominate over residues 1-18 (MTRTTGAAPDRAAPAAGE). Residues 1–23 (MTRTTGAAPDRAAPAAGETPGGG) are disordered.

It belongs to the CheD family.

It catalyses the reaction L-glutaminyl-[protein] + H2O = L-glutamyl-[protein] + NH4(+). Its function is as follows. Probably deamidates glutamine residues to glutamate on methyl-accepting chemotaxis receptors (MCPs), playing an important role in chemotaxis. The polypeptide is Probable chemoreceptor glutamine deamidase CheD 1 (Anaeromyxobacter dehalogenans (strain 2CP-C)).